Consider the following 117-residue polypeptide: Big defensin (117 aa).

An N-terminal signal peptide occupies residues 1-23; it reads MEKKTAYCLLFLVLLVPYTALGA. Residues 24 to 33 constitute a propeptide that is removed on maturation; it reads VLKRAPAKKE. 3 disulfides stabilise this stretch: Cys-82–Cys-112, Cys-89–Cys-107, and Cys-93–Cys-113.

Belongs to the big defensin family.

It localises to the secreted. In terms of biological role, significantly inhibits the growth of Gram-negative and Gram-positive bacteria and fungi in vitro. The protein is Big defensin of Branchiostoma belcheri (Amphioxus).